We begin with the raw amino-acid sequence, 420 residues long: Nucleobindin-2 (420 aa).

Residues 1 to 24 (MRWRTILLQYCFLLITCLLTALEA) form the signal peptide. Residues 171–223 (KTRHEEFKKYEMMKEHERREYLKTLNEEKRKEEESKFEEMKKKHENHPKVNHP) mediate DNA binding. Basic and acidic residues predominate over residues 195 to 212 (LNEEKRKEEESKFEEMKK). The interval 195 to 225 (LNEEKRKEEESKFEEMKKKHENHPKVNHPGS) is disordered. The segment at 213-420 (KHENHPKVNH…AGELKFEPHI (208 aa)) is binds to necdin. EF-hand domains follow at residues 241–276 (PNDF…ELEK) and 293–328 (ERLR…KEFL). Ca(2+)-binding residues include D254 and N256. S257 carries the phosphoserine modification. Residues D258, E265, D306, N308, D310, and E317 each coordinate Ca(2+). Positions 304-334 (EVDTNKDRLVTLEEFLKATEKKEFLEPDSWE) match the GBA motif. Position 332 is a phosphoserine (S332). Residues 398–420 (QKKLQQGIPPSGPAGELKFEPHI) are disordered.

This sequence belongs to the nucleobindin family. Interacts (via GBA motif) with guanine nucleotide-binding protein G(i) alpha subunit GNAI3. Preferentially interacts with inactive rather than active GNAI3. Interaction with GNAI3 is inhibited when NUCB2 binds calcium, probably due to a conformational change which renders the GBA motif inaccessible. Binds to the postmitotic growth suppressor NDN; coexpression abolishes NUCB2 secretion. Interacts with MC4R. In terms of tissue distribution, predominantly expressed in spleen, testis and normal stomach.

It localises to the golgi apparatus. The protein localises to the membrane. The protein resides in the cytoplasm. Its subcellular location is the secreted. It is found in the endoplasmic reticulum. It localises to the nucleus envelope. Its function is as follows. Calcium-binding protein which may have a role in calcium homeostasis. Acts as a non-receptor guanine nucleotide exchange factor which binds to and activates guanine nucleotide-binding protein (G-protein) alpha subunit GNAI3. Functionally, anorexigenic peptide, seems to play an important role in hypothalamic pathways regulating food intake and energy homeostasis, acting in a leptin-independent manner. May also exert hypertensive roles and modulate blood pressure through directly acting on peripheral arterial resistance. In intestinal epithelial cells, plays a role in the inhibition of hepatic glucose production via MC4R receptor leading to increased cyclic adenosine monophosphate (cAMP) levels and glucagon-like peptide 1 (GLP-1) secretion. This Homo sapiens (Human) protein is Nucleobindin-2.